The primary structure comprises 120 residues: Basic phospholipase A2 homolog piratoxin-3 (120 aa).

7 disulfides stabilise this stretch: Cys-26-Cys-113, Cys-28-Cys-44, Cys-43-Cys-94, Cys-49-Cys-120, Cys-50-Cys-87, Cys-57-Cys-81, and Cys-75-Cys-85. Positions 104-115 (KKYRYHLKPCKK) are important for membrane-damaging activities in eukaryotes and bacteria; heparin-binding.

This sequence belongs to the phospholipase A2 family. Group II subfamily. D49 sub-subfamily. Homodimer; non-covalently linked (probable alternative/compact dimer conformation). In terms of tissue distribution, expressed by the venom gland.

It is found in the secreted. Snake venom phospholipase A2 (PLA2) that lacks enzymatic activity. Shows high myotoxin activities. Also has anticoagulant activity. A model of myotoxic mechanism has been proposed: an apo Lys49-PLA2 is activated by the entrance of a hydrophobic molecule (e.g. fatty acid) at the hydrophobic channel of the protein leading to a reorientation of a monomer. This reorientation causes a transition between 'inactive' to 'active' states, causing alignment of C-terminal and membrane-docking sites (MDoS) side-by-side and putting the membrane-disruption sites (MDiS) in the same plane, exposed to solvent and in a symmetric position for both monomers. The MDoS region stabilizes the toxin on membrane by the interaction of charged residues with phospholipid head groups. Subsequently, the MDiS region destabilizes the membrane with penetration of hydrophobic residues. This insertion causes a disorganization of the membrane, allowing an uncontrolled influx of ions (i.e. calcium and sodium), and eventually triggering irreversible intracellular alterations and cell death. The polypeptide is Basic phospholipase A2 homolog piratoxin-3 (Bothrops pirajai (Piraja's lancehead)).